The chain runs to 227 residues: Cytochrome c oxidase subunit 2 (227 aa).

The Mitochondrial intermembrane portion of the chain corresponds to 1–14 (MAYPFQLGLQDATS). The helical transmembrane segment at 15–45 (PIMEELLHFHDHALMIVFLISSLVLYIISLM) threads the bilayer. Residues 46–59 (LTTKLTHTSTMDAQ) lie on the Mitochondrial matrix side of the membrane. The chain crosses the membrane as a helical span at residues 60-87 (EVETVWTILPAIILILIALPSLRILYMM). Topologically, residues 88–227 (DEINNPSLTV…YFETWSALMV (140 aa)) are mitochondrial intermembrane. The Cu cation site is built by His161, Cys196, Glu198, Cys200, His204, and Met207. Residue Glu198 coordinates Mg(2+). A Phosphotyrosine modification is found at Tyr218.

It belongs to the cytochrome c oxidase subunit 2 family. As to quaternary structure, component of the cytochrome c oxidase (complex IV, CIV), a multisubunit enzyme composed of 14 subunits. The complex is composed of a catalytic core of 3 subunits MT-CO1, MT-CO2 and MT-CO3, encoded in the mitochondrial DNA, and 11 supernumerary subunits COX4I, COX5A, COX5B, COX6A, COX6B, COX6C, COX7A, COX7B, COX7C, COX8 and NDUFA4, which are encoded in the nuclear genome. The complex exists as a monomer or a dimer and forms supercomplexes (SCs) in the inner mitochondrial membrane with NADH-ubiquinone oxidoreductase (complex I, CI) and ubiquinol-cytochrome c oxidoreductase (cytochrome b-c1 complex, complex III, CIII), resulting in different assemblies (supercomplex SCI(1)III(2)IV(1) and megacomplex MCI(2)III(2)IV(2)). Found in a complex with TMEM177, COA6, COX18, COX20, SCO1 and SCO2. Interacts with TMEM177 in a COX20-dependent manner. Interacts with COX20. Interacts with COX16. The cofactor is Cu cation.

Its subcellular location is the mitochondrion inner membrane. The enzyme catalyses 4 Fe(II)-[cytochrome c] + O2 + 8 H(+)(in) = 4 Fe(III)-[cytochrome c] + 2 H2O + 4 H(+)(out). Functionally, component of the cytochrome c oxidase, the last enzyme in the mitochondrial electron transport chain which drives oxidative phosphorylation. The respiratory chain contains 3 multisubunit complexes succinate dehydrogenase (complex II, CII), ubiquinol-cytochrome c oxidoreductase (cytochrome b-c1 complex, complex III, CIII) and cytochrome c oxidase (complex IV, CIV), that cooperate to transfer electrons derived from NADH and succinate to molecular oxygen, creating an electrochemical gradient over the inner membrane that drives transmembrane transport and the ATP synthase. Cytochrome c oxidase is the component of the respiratory chain that catalyzes the reduction of oxygen to water. Electrons originating from reduced cytochrome c in the intermembrane space (IMS) are transferred via the dinuclear copper A center (CU(A)) of subunit 2 and heme A of subunit 1 to the active site in subunit 1, a binuclear center (BNC) formed by heme A3 and copper B (CU(B)). The BNC reduces molecular oxygen to 2 water molecules using 4 electrons from cytochrome c in the IMS and 4 protons from the mitochondrial matrix. This chain is Cytochrome c oxidase subunit 2 (MT-CO2), found in Canis aureus (Golden jackal).